Here is a 277-residue protein sequence, read N- to C-terminus: Transcription factor HES-4-B (277 aa).

Residues 1 to 44 (MPADSMEKPTASPIAGAPANSAQTPDKPKSASEHRKSSKPIMEK) are disordered. Residues 26–35 (DKPKSASEHR) are compositionally biased toward basic and acidic residues. The bHLH domain maps to 34–91 (HRKSSKPIMEKRRRARINESLGQLKTLILDALKKDSSRHSKLEKADILEMTVKHLRNL). One can recognise an Orange domain in the interval 110–143 (YRAGFNECMNEVTRFLSTCEGVNTEVRTRLLGHL). Residues 258-277 (VSPLGGSTRADSAESVWRPW) form a disordered region. Residues 274-277 (WRPW) carry the WRPW motif motif.

As to quaternary structure, transcription repression requires formation of a complex with a corepressor protein of the Groucho/TLE family. Interacts with the bHLH protein hes6; this interaction may inhibit the transcriptional repressor activity. Binds DNA in the form of a heterodimer with the bHLH protein hey1/hrt1. Interacts (via Orange domain) with id3 (via HLH domain). As to expression, dynamically expressed in the borders of several tissue territories. Expressed in the pre-placodal ectoderm (PPE) from gastrula stage. During gastrulation, expressed in the deep layer of the dorsal lip, the Spemann organizer and three distinct regions in the prospective neuroectoderm: neural plate border, presumptive floor plate/notoplate and anterior neural plate. At later stages, expression is localized to the anterior of the prechordal plate, the presomitic mesoderm, neural tube, neural crest derivatives and several tissues of the central nervous system, with expression in the developing floor plate continues to at least the tadpole stage. From the early tailbud stage, expressed in the dorsoanterior region of the developing pronephros. During early tailbud stages, broadly expressed within the pronephric mesoderm. and in the sensorial layer of the ectoderm covering the pronephros anlagen. During late tailbud to early tadpole stages, expressed in the ventral region of the pronephros. Expression remains in the proximal and distal tubules at late tadpole stages (stage 35).

It is found in the nucleus. Functionally, transcriptional repressor. Binds DNA on N-box motifs: 5'-CACNAG-3'. Promotes floor plate development and prechordal plate development. Required for lens development as early as the stage of lens field formation, partly through regulation of gene expression of the cell cycle inhibitor cdknx/p27(xic1). Required for formation of the neural crest downstream of multiple signaling pathways, and acts at the neural plate border via both DNA-binding dependent and independent mechanisms; acts in a DNA-binding dependent manner to repress pro-apoptotic and neural crest differentiation genes, including id3, delta1, and cdknx/p27(xic1), and thus promote the cell survival of neural plate border cells and maintain them in an undifferentiated state. Represses transcription of id3, at least in part through the repression of bmp4. On the other hand, acts in a DNA-independent manner separate from the transcriptional repressor function, to stimulate cell proliferation and promote neural crest formation. Via this DNA-independent route, acts in neurulae upstream of stat3 to transiently up-regulate the notch ligand dll1/delta1, which in turn up-regulates id3 expression. Then interacts directly with id3, which blocks the transcriptional repressor function of hes4-B/hairy2b to allow the progression of neural crest progenitors through specification and differentiation. Also acts via repressor-dependent and repressor-independent mechanisms in early gastrulae to establish the prospective anterior prechordal mesoderm identity in the Spemann organizer; induces specific genes independently from direct transcriptional regulation, and represses the genes specific for neighboring tissues through direct transcriptional repression. Modulates lateral inhibition during notch signaling and regulates the cell context dependent effects of notch (which can have inhibitory, permissive or enhancing roles in muscle or neural differentiation). Inhibits myogenesis. The polypeptide is Transcription factor HES-4-B (hes4-b) (Xenopus laevis (African clawed frog)).